A 412-amino-acid chain; its full sequence is Imidazolonepropionase (412 aa).

Positions 76 and 78 each coordinate Fe(3+). Positions 76 and 78 each coordinate Zn(2+). 4-imidazolone-5-propanoate contacts are provided by Arg-85, Tyr-148, and His-181. Tyr-148 is an N-formimidoyl-L-glutamate binding site. Fe(3+) is bound at residue His-242. Residue His-242 coordinates Zn(2+). 4-imidazolone-5-propanoate is bound at residue Glu-245. A Fe(3+)-binding site is contributed by Asp-317. Asp-317 is a binding site for Zn(2+). Asn-319 and Gly-321 together coordinate N-formimidoyl-L-glutamate. Position 322 (Ser-322) interacts with 4-imidazolone-5-propanoate.

The protein belongs to the metallo-dependent hydrolases superfamily. HutI family. Requires Zn(2+) as cofactor. Fe(3+) is required as a cofactor.

The protein localises to the cytoplasm. The enzyme catalyses 4-imidazolone-5-propanoate + H2O = N-formimidoyl-L-glutamate. Its pathway is amino-acid degradation; L-histidine degradation into L-glutamate; N-formimidoyl-L-glutamate from L-histidine: step 3/3. Its function is as follows. Catalyzes the hydrolytic cleavage of the carbon-nitrogen bond in imidazolone-5-propanoate to yield N-formimidoyl-L-glutamate. It is the third step in the universal histidine degradation pathway. The chain is Imidazolonepropionase from Staphylococcus aureus (strain bovine RF122 / ET3-1).